The chain runs to 459 residues: Probable 3-ketoacyl-CoA synthase 14 (459 aa).

An N-terminal signal peptide occupies residues 1–25 (MFIAMADFKLLLLILILLSLFELDL). A helical transmembrane segment spans residues 32-52 (FFSPFPVKIGLLLISIFFYAY). The FAE domain maps to 52–334 (YSTTRSKPVY…FILFLVKSKL (283 aa)). Active-site residues include H268, H352, H356, H385, and N389.

Belongs to the thiolase-like superfamily. Chalcone/stilbene synthases family. In terms of tissue distribution, expressed in siliques.

The protein localises to the membrane. The enzyme catalyses a very-long-chain acyl-CoA + malonyl-CoA + H(+) = a very-long-chain 3-oxoacyl-CoA + CO2 + CoA. It participates in lipid metabolism; fatty acid biosynthesis. The polypeptide is Probable 3-ketoacyl-CoA synthase 14 (Arabidopsis thaliana (Mouse-ear cress)).